Reading from the N-terminus, the 191-residue chain is Guanylate kinase (191 aa).

Residues 10–188 (GQLIVLTGPS…ALHRLVKLIG (179 aa)) form the Guanylate kinase-like domain. 17 to 24 (GPSGVGKG) provides a ligand contact to ATP.

It belongs to the guanylate kinase family.

The protein localises to the cytoplasm. It catalyses the reaction GMP + ATP = GDP + ADP. Essential for recycling GMP and indirectly, cGMP. The polypeptide is Guanylate kinase (gmk) (Synechocystis sp. (strain ATCC 27184 / PCC 6803 / Kazusa)).